Consider the following 207-residue polypeptide: MALLFARSLRLCRWGAKRLGVASTEAQRGVSFKLEEKTAHSSLALFRDDTGVKYGLVGLEPTKVALNVERFREWAVVLADTAVTSGRHYWEVTVKRSQQFRIGVADVDMSRDSCIGVDDRSWVFTYAQRKWYTMLANEKAPVEGIGQPEKVGLLLEYEAQKLSLVDVSQVSVVHTLQTDFRGPVVPAFALWDGELLTHSGLEVPEGL.

A B30.2/SPRY domain is found at 12–206; that stretch reads CRWGAKRLGV…THSGLEVPEG (195 aa). N6-acetyllysine is present on residues Lys-53 and Lys-130. Residue Lys-139 is modified to N6-succinyllysine.

The sequence is that of SPRY domain-containing protein 4 (SPRYD4) from Homo sapiens (Human).